A 327-amino-acid polypeptide reads, in one-letter code: Phenylalanine--tRNA ligase alpha subunit (327 aa).

Mg(2+) is bound at residue glutamate 252.

The protein belongs to the class-II aminoacyl-tRNA synthetase family. Phe-tRNA synthetase alpha subunit type 1 subfamily. In terms of assembly, tetramer of two alpha and two beta subunits. The cofactor is Mg(2+).

It localises to the cytoplasm. The catalysed reaction is tRNA(Phe) + L-phenylalanine + ATP = L-phenylalanyl-tRNA(Phe) + AMP + diphosphate + H(+). The protein is Phenylalanine--tRNA ligase alpha subunit of Shigella flexneri.